Consider the following 388-residue polypeptide: Mitochondrial distribution and morphology protein 12 (388 aa).

An SMP-LTD domain is found at 1–388 (MSLDINWSLL…VFPNFHTVAL (388 aa)). Disordered regions lie at residues 75–101 (DDEG…RNEA) and 209–249 (PMSI…KVSS). The segment covering 83-101 (EEKQREKEREERDKLRNEA) has biased composition (basic and acidic residues). The segment covering 234–243 (PSPPAHPAGL) has biased composition (pro residues).

This sequence belongs to the MDM12 family. Component of the ER-mitochondria encounter structure (ERMES) or MDM complex, composed of MMM1, MDM10, MDM12 and MDM34. An MMM1 homodimer associates with one molecule of MDM12 on each side in a pairwise head-to-tail manner, and the SMP-LTD domains of MMM1 and MDM12 generate a continuous hydrophobic tunnel for phospholipid trafficking.

Its subcellular location is the mitochondrion outer membrane. It is found in the endoplasmic reticulum membrane. Functionally, component of the ERMES/MDM complex, which serves as a molecular tether to connect the endoplasmic reticulum (ER) and mitochondria. Components of this complex are involved in the control of mitochondrial shape and protein biogenesis, and function in nonvesicular lipid trafficking between the ER and mitochondria. MDM12 is required for the interaction of the ER-resident membrane protein MMM1 and the outer mitochondrial membrane-resident beta-barrel protein MDM10. The MDM12-MMM1 subcomplex functions in the major beta-barrel assembly pathway that is responsible for biogenesis of all mitochondrial outer membrane beta-barrel proteins, and acts in a late step after the SAM complex. The MDM10-MDM12-MMM1 subcomplex further acts in the TOM40-specific pathway after the action of the MDM12-MMM1 complex. Essential for establishing and maintaining the structure of mitochondria and maintenance of mtDNA nucleoids. This is Mitochondrial distribution and morphology protein 12 from Cryptococcus neoformans var. neoformans serotype D (strain JEC21 / ATCC MYA-565) (Filobasidiella neoformans).